A 558-amino-acid polypeptide reads, in one-letter code: Armadillo repeat-containing X-linked protein 5 (558 aa).

Basic and acidic residues-rich tracts occupy residues 1–14 (MVDSGTEARARGKA) and 139–156 (KSHDKANTGSRPDRREET). 2 disordered regions span residues 1–35 (MVDSGTEARARGKAEAGLQDGISGPATARVNGKTQ) and 139–165 (KSHDKANTGSRPDRREETSIGMKSSDE). The stretch at 300-339 (CKSRGFSLEPKEFDKLVALLKLTKDPFIHEIATMIMGISP) is one ARM 1 repeat. The tract at residues 369–388 (HPGALSMVDDSSESSEEPKS) is disordered. ARM repeat units follow at residues 422–461 (IKFEDHYVITSYIPDFLTLLNKGSVKTKFYVLKVFSCLSK), 463–503 (HANT…NINF), and 520–558 (SELISIFQEAKQFGQKLQDLAEHSDPEVRDKVIRLILKL).

Belongs to the eutherian X-chromosome-specific Armcx family.

The sequence is that of Armadillo repeat-containing X-linked protein 5 (ARMCX5) from Homo sapiens (Human).